The primary structure comprises 269 residues: UPF0328 protein ECU03_0020 (269 aa).

The protein belongs to the UPF0328 family.

This chain is UPF0328 protein ECU03_0020, found in Encephalitozoon cuniculi (strain GB-M1) (Microsporidian parasite).